We begin with the raw amino-acid sequence, 271 residues long: Extent of cell elongation protein 1 (271 aa).

Residues 1–18 (MKFSKIACATVFALSSQA) form the signal peptide. A helical transmembrane segment spans residues 62–82 (SIIGIIMGILGNIPQVIQIIM).

In terms of assembly, polymerizes in solution to form membrane pores. Post-translationally, cleavage by KEX2 generates 8 peptides ECE1-I to ECE1-VIII, all terminating in Lys-Arg. Only peptide ECE1-III, called candidalysin, shows toxin activity.

It is found in the secreted. The protein resides in the host cell membrane. Its function is as follows. Secreted protein cleaved by KEX2 in 8 similar peptides (ECE1-I to ECE1-VIII). Stimulates biofilm formation. Functionally, acts as a cytolytic peptide toxin that directly damages host epithelial membranes, triggers a danger response signaling pathway and activates epithelial immunity. Polymerizes in solution to form membrane pores to damage epithelial cells. Induces calcium influx, oxidative stress, mitochondrial dysfunction and ATP depletion in host cells, leading to epithelial necrosis. Serves as a danger signal that potentiates the immune response, and more specifically IL-17 response. Induces cytokine/chemokine secretion by host (especially CCL2/3/4, CXCL1 and S100A8), neutrophil recruitment, and promotes mortality in zebrafish and murine models of systemic fungal infection. Mediates distinct epithelial inflammatory responses through p38, EGFR-ERK and TREM-1/DAP12 pathways. Acts as one of the hypha-derived drivers of NLRP3 inflammasome responses in primary macrophages and thus contributes to the capacity to induce maturation and secretion of IL-1beta from primary macrophages. Stimulates mast cells by mediating cross-talk between signaling pathways activated by the dectin-1 receptor and MAPKs. Enables escape via the gasdermin-mediated pyroptosis, as well as a cell lysis pathway associated with macrophage extracellular trap formation termed ETosis. Acts as the main hemolytic factor of C.albicans. As an exotoxine, also promotes alcohol-associated liver disease or oral carcinogenesis. The chain is Extent of cell elongation protein 1 from Candida albicans (strain SC5314 / ATCC MYA-2876) (Yeast).